The sequence spans 263 residues: Indole-3-glycerol phosphate synthase (263 aa).

Belongs to the TrpC family.

The enzyme catalyses 1-(2-carboxyphenylamino)-1-deoxy-D-ribulose 5-phosphate + H(+) = (1S,2R)-1-C-(indol-3-yl)glycerol 3-phosphate + CO2 + H2O. It participates in amino-acid biosynthesis; L-tryptophan biosynthesis; L-tryptophan from chorismate: step 4/5. The sequence is that of Indole-3-glycerol phosphate synthase from Desulfosudis oleivorans (strain DSM 6200 / JCM 39069 / Hxd3) (Desulfococcus oleovorans).